A 322-amino-acid polypeptide reads, in one-letter code: MAVVKEVLEIAEKIKNMEIRGAGKIARSAAYALQLQAEKSKATNVDEFWKEMKQAAKILFETRPTAVSLPNALRYVMHRGKIAYSSGADLEQLRFVIINAAKEFIHNSEKALERIGEFGAKRIEDGDVIMTHCHSKAAISVMKTAWEQGKDIKVIVTETRPKWQGKITAKELASYGIPVIYVVDSAARHYMKMTDKVVMGADSITVNGAVINKIGTALIALTAKEHRVWTMIAAETYKFHPETMLGQLVEIEMRDPTEVIPEDELKTWPKNIEVWNPAFDVTPPEYVDVIITERGIIPPYAAIDILREEFGWALKYTEPWED.

Residues 20–23 (RGAG) and Arg63 contribute to the substrate site. Residue Cys133 is the Proton acceptor of the active site. 135–137 (SKA) is a substrate binding site. The Proton donor role is filled by Asp202. Substrate contacts are provided by residues 212-213 (NK) and Lys238.

The protein belongs to the eIF-2B alpha/beta/delta subunits family. R15P isomerase subfamily. As to quaternary structure, homohexamer; trimer of dimers.

The enzyme catalyses alpha-D-ribose 1,5-bisphosphate = D-ribulose 1,5-bisphosphate. With respect to regulation, is highly activated in the presence of AMP, with an increase of &gt;40-fold in activity levels. Among other nucleotides, isomerase activity is slightly increased in the presence of GMP, but CMP, UMP, TMP, and NAD(+) have no effect; therefore, AMP is likely the major activator of R15P isomerase in vivo. To a lesser extent, various compounds with an adenosyl moiety, such as dAMP, adenosine, or methylthioadenosine, can also act as activators. The regulation of this enzyme by AMP prevents excess degradation of intracellular AMP by the archaeal AMP degradation pathway. Its function is as follows. Catalyzes the isomerization of ribose 1,5-bisphosphate (R15P) to ribulose 1,5-bisphosphate (RuBP), the CO(2) acceptor and substrate for RubisCO. Only accepts the alpha-anomer of D-ribose 1,5-bisphosphate as substrate, being inactive on the beta-anomer. Displays a strict substrate specificity, since other phosphorylated sugars such as R5P, ribose, G16P, G6P, G1P, FBP, F6P, and PRPP, are not substrates. Functions in an archaeal AMP degradation pathway, together with AMP phosphorylase and RubisCO. The sequence is that of Ribose 1,5-bisphosphate isomerase from Thermococcus kodakarensis (strain ATCC BAA-918 / JCM 12380 / KOD1) (Pyrococcus kodakaraensis (strain KOD1)).